The chain runs to 670 residues: RxLR effector protein PSR2 (670 aa).

A signal peptide spans 1 to 17 (MRLQCVVLFAALTLVAA). Positions 39–54 (RLLRPGNPAGKEDEER) match the RxLR-dEER motif. Asn-57 carries N-linked (GlcNAc...) asparagine glycosylation. The stretch at 79–126 (KLLKWADAKKPPETVFTRLRLDKTGTQLFDNTDFPVWAAYTRSVAQTD) is one WY1 repeat. The tract at residues 79–670 (KLLKWADAKK…YSAKFKVRWG (592 aa)) is 7 X 93 AA tandem repeats. The LWY2 repeat unit spans residues 127–217 (SEASAVMLKT…NYMKLSNKEN (91 aa)). Residues 218 to 308 (PKAQTTLIAT…KYINYYNKEN (91 aa)) form an LWY3 repeat. Residues 309–399 (PDEKTTVLAK…KYTENFNLNK (91 aa)) form an LWY4 repeat. An LWY5 repeat occupies 400 to 492 (EINEQVTAIQ…KFLEKYNTAN (93 aa)). The stretch at 493-583 (PGKEQTMISG…KYLNAFNDKA (91 aa)) is one LWY6 repeat. The LWY7 repeat unit spans residues 584–670 (PVKKALMIDT…YSAKFKVRWG (87 aa)).

Belongs to the RxLR effector family. Interacts with host dsRNA-binding protein DRB4.

The protein resides in the secreted. Its subcellular location is the host cell. In terms of biological role, secreted effector that possesses RNA silencing suppression activity by inhibiting the biogenesis of small RNAs in the host plant to promote enhanced susceptibility of host to the pathogen during infection. Interferes with secondary siRNA production by associating with host dsRNA-binding protein DRB4. Inhibits the host salicylic acid pathway during infection. The chain is RxLR effector protein PSR2 from Phytophthora sojae (Soybean stem and root rot agent).